The following is a 182-amino-acid chain: Ribosome maturation factor RimP (182 aa).

Belongs to the RimP family.

The protein localises to the cytoplasm. Functionally, required for maturation of 30S ribosomal subunits. The polypeptide is Ribosome maturation factor RimP (Corynebacterium efficiens (strain DSM 44549 / YS-314 / AJ 12310 / JCM 11189 / NBRC 100395)).